Here is a 308-residue protein sequence, read N- to C-terminus: Cytochrome c biogenesis protein CcsA (308 aa).

Transmembrane regions (helical) follow at residues 17–37 (IISI…VGLC), 43–63 (GMIT…IYSG), 70–90 (LYES…VPYF), 142–162 (MLLS…LLVI), 213–233 (VIGL…VWAN), 246–260 (ETWA…AIYL), and 274–294 (AIVA…VNLL).

The protein belongs to the CcmF/CycK/Ccl1/NrfE/CcsA family. In terms of assembly, may interact with Ccs1.

It localises to the plastid. Its subcellular location is the chloroplast thylakoid membrane. Functionally, required during biogenesis of c-type cytochromes (cytochrome c6 and cytochrome f) at the step of heme attachment. This chain is Cytochrome c biogenesis protein CcsA, found in Nymphaea alba (White water-lily).